A 161-amino-acid chain; its full sequence is Lipid droplet assembly factor 1 (161 aa).

The Cytoplasmic segment spans residues methionine 1–arginine 43. A helical transmembrane segment spans residues phenylalanine 44–methionine 61. At serine 62–glycine 67 the chain is on the lumenal side. Residues phenylalanine 68–leucine 87 traverse the membrane as a helical segment. Topologically, residues glutamate 88 to serine 93 are cytoplasmic. Residues valine 94–serine 110 traverse the membrane as a helical segment. Residues leucine 111–isoleucine 116 lie on the Lumenal side of the membrane. Residues threonine 117 to serine 133 traverse the membrane as a helical segment. Over proline 134–leucine 161 the chain is Cytoplasmic.

It belongs to the LDAF1 family. Interacts with BSCL2/seipin to form an oligomeric complex.

It is found in the endoplasmic reticulum membrane. It localises to the lipid droplet. Its function is as follows. Plays an important role in the formation of lipid droplets (LD) which are storage organelles at the center of lipid and energy homeostasis. In association with BSCL2/seipin, defines the sites of LD formation in the endoplasmic reticulum. The protein is Lipid droplet assembly factor 1 of Rattus norvegicus (Rat).